A 213-amino-acid chain; its full sequence is Na(+)-translocating NADH-quinone reductase subunit D (213 aa).

6 consecutive transmembrane segments (helical) span residues 21–41 (PLIAILGICSALAVTTTVNTA), 42–62 (ITMGLAVSFVTGCSSFFVSLL), 69–86 (SVRMITQLIIISLFVIVI), 101–121 (LSVFVGLIITNCIVMGRAESL), 131–151 (FLDGLASGLGYGWVLVTVSIV), and 183–203 (FGLMVLAPSAFFLLGIMIWGV).

Belongs to the NqrDE/RnfAE family. In terms of assembly, composed of six subunits; NqrA, NqrB, NqrC, NqrD, NqrE and NqrF.

The protein localises to the cell inner membrane. It catalyses the reaction a ubiquinone + n Na(+)(in) + NADH + H(+) = a ubiquinol + n Na(+)(out) + NAD(+). NQR complex catalyzes the reduction of ubiquinone-1 to ubiquinol by two successive reactions, coupled with the transport of Na(+) ions from the cytoplasm to the periplasm. NqrA to NqrE are probably involved in the second step, the conversion of ubisemiquinone to ubiquinol. The sequence is that of Na(+)-translocating NADH-quinone reductase subunit D from Chlamydia caviae (strain ATCC VR-813 / DSM 19441 / 03DC25 / GPIC) (Chlamydophila caviae).